A 349-amino-acid chain; its full sequence is tRNA pseudouridine synthase D (349 aa).

Phenylalanine 27 contacts substrate. The active-site Nucleophile is the aspartate 80. Residue asparagine 129 coordinates substrate. One can recognise a TRUD domain in the interval 155 to 303 (GVPNYFGAQR…VEAARRAMLL (149 aa)). Phenylalanine 329 is a binding site for substrate.

This sequence belongs to the pseudouridine synthase TruD family.

It catalyses the reaction uridine(13) in tRNA = pseudouridine(13) in tRNA. Functionally, responsible for synthesis of pseudouridine from uracil-13 in transfer RNAs. This Shigella boydii serotype 18 (strain CDC 3083-94 / BS512) protein is tRNA pseudouridine synthase D.